The sequence spans 291 residues: Small ribosomal subunit protein uS2 (291 aa).

It belongs to the universal ribosomal protein uS2 family.

The sequence is that of Small ribosomal subunit protein uS2 from Orientia tsutsugamushi (strain Boryong) (Rickettsia tsutsugamushi).